Reading from the N-terminus, the 274-residue chain is Protein RecA (274 aa).

43-50 (GPESSGKT) contacts ATP.

This sequence belongs to the RecA family.

The protein localises to the cytoplasm. In terms of biological role, can catalyze the hydrolysis of ATP in the presence of single-stranded DNA, the ATP-dependent uptake of single-stranded DNA by duplex DNA, and the ATP-dependent hybridization of homologous single-stranded DNAs. It interacts with LexA causing its activation and leading to its autocatalytic cleavage. This chain is Protein RecA, found in Neisseria pharyngis.